The primary structure comprises 525 residues: Cyclic AMP-responsive element-binding protein 3-like protein 2 (525 aa).

The Cytoplasmic portion of the chain corresponds to 1–382 (MEIMESGDPV…SCKAAGTQTG (382 aa)). 3 disordered regions span residues 85 to 104 (LCGD…DDNF), 203 to 267 (EALQ…QGSG), and 309 to 338 (NKIS…SSEN). Polar residues-rich tracts occupy residues 90–102 (RPQS…SSDD) and 213–239 (SSHG…QSQA). The 64-residue stretch at 299–362 (ALKKIRRKIK…RTLLQQLQRL (64 aa)) folds into the bZIP domain. Positions 301–330 (KKIRRKIKNKISAQESRRKKKEYMDSLEKR) are basic motif. Positions 322–332 (EYMDSLEKRVE) are enriched in basic and acidic residues. Positions 341–362 (LRKKVEVLESTNRTLLQQLQRL) are leucine-zipper. The helical; Signal-anchor for type II membrane protein transmembrane segment at 383 to 403 (TCLMMVVLCFAVIFGSFTQNL) threads the bilayer. Topologically, residues 404-525 (DMYSSSSKTI…ELDRTVNTTS (122 aa)) are lumenal. Positions 433 to 436 (RKLL) match the S1P recognition motif. N-linked (GlcNAc...) asparagine glycans are attached at residues asparagine 490, asparagine 509, and asparagine 522.

Belongs to the bZIP family. ATF subfamily. Binds DNA as a dimer. Post-translationally, upon ER stress, translocated to the Golgi apparatus, where it is processed by regulated intramembrane proteolysis (RIP) to release the cytosol-facing N-terminal transcription factor domain. The cleavage is performed sequentially by site-1 and site-2 proteases (S1P/mbtps1 and S2P/mbtps2).

It localises to the endoplasmic reticulum membrane. The protein localises to the nucleus. Its function is as follows. Transcription factor involved in unfolded protein response (UPR). In the absence of endoplasmic reticulum (ER) stress, inserted into ER membranes, with N-terminal DNA-binding and transcription activation domains oriented toward the cytosolic face of the membrane. In response to ER stress, transported to the Golgi, where it is cleaved in a site-specific manner by resident proteases S1P/mbtps1 and S2P/mbtps2. The released N-terminal cytosolic domain is translocated to the nucleus to effect transcription of specific target genes. Plays a critical role in chondrogenesis. May protect neuroblastoma cells from ER stress-induced death. In vitro activates transcription of target genes via direct binding to the CRE site. This is Cyclic AMP-responsive element-binding protein 3-like protein 2 (creb3l2) from Xenopus laevis (African clawed frog).